A 744-amino-acid polypeptide reads, in one-letter code: Tripartite motif-containing protein 2 (744 aa).

The residue at position 10 (Ser-10) is a Phosphoserine. The RING-type zinc-finger motif lies at 23-64 (CSICLERYKNPKVLPCLHTFCERCLQNYIPAHSLTLSCPVCR). The B box-type zinc-finger motif lies at 113–154 (GKPLSCPNHDGNVMEFYCQSCETAMCRECTEGEHAEHPTVPL). The Zn(2+) site is built by Cys-118, His-121, Cys-141, and His-146. The Filamin repeat unit spans residues 320–421 (TTNAVASETV…IRGSPFKLKV (102 aa)). The residue at position 371 (Thr-371) is a Phosphothreonine. Phosphoserine is present on residues Ser-375, Ser-424, and Ser-428. The tract at residues 432–462 (EGVKRRVKSPGSGHVKQKAVKRPASMYSTGK) is disordered. NHL repeat units follow at residues 473–516 (IFRV…FSND), 520–563 (KSRF…FSND), 564–605 (GKFK…FQPN), 609–652 (VTRF…FNQE), 656–699 (MLKF…FDGS), and 700–743 (GSFL…YRYL).

The protein belongs to the TRIM/RBCC family. Forms homooligomers. Interacts with TRIM3; this interaction reduces TRIM2 activity. Interacts with myosin V; myosin V may not be a substrate for ubiquitination. Interacts with NEFL. Interacts with phosphorylated BCL2L11. Interacts with SIRPA. RING-type zinc finger-dependent and UBE2D1-dependent autoubiquitination. As to expression, highly expressed in the cerebellum, hippocampus, retina and spinal cord. In the cerebellum, strongest expression in Purkinje cells and in the deep cerebellar nuclei. In retina, high expression in the ganglionic cell layer, inner nuclear layer and inthe outer plexiform layer. Particularly high expression in the hippocampus, in pyramidal cells of CA1-CA3 hippocampal areas and ingranule cells of the dentate gyrus.

It localises to the cytoplasm. The catalysed reaction is S-ubiquitinyl-[E2 ubiquitin-conjugating enzyme]-L-cysteine + [acceptor protein]-L-lysine = [E2 ubiquitin-conjugating enzyme]-L-cysteine + N(6)-ubiquitinyl-[acceptor protein]-L-lysine.. It participates in protein modification; protein ubiquitination. Its function is as follows. UBE2D1-dependent E3 ubiquitin-protein ligase that mediates the ubiquitination of NEFL and of phosphorylated BCL2L11. Plays a neuroprotective function. May play a role in neuronal rapid ischemic tolerance. Plays a role in antiviral immunity and limits new world arenavirus infection independently of its ubiquitin ligase activity by decreasing virus internalization. This is Tripartite motif-containing protein 2 (Trim2) from Mus musculus (Mouse).